Here is a 68-residue protein sequence, read N- to C-terminus: Conotoxin PnMLKM-011 (68 aa).

The first 17 residues, 1–17 (MGVVLFIFLVLFPLATL), serve as a signal peptide directing secretion. The propeptide occupies 18–51 (QLDPDQPVERYAENKQLLNPDERRGIILHALGQR). Cystine bridges form between Cys53–Cys65, Cys54–Cys63, and Cys59–Cys66. Residue Leu67 is modified to Leucine amide.

Belongs to the conotoxin M superfamily. Expressed by the venom duct.

It is found in the secreted. The polypeptide is Conotoxin PnMLKM-011 (Conus pennaceus (Feathered cone)).